A 135-amino-acid polypeptide reads, in one-letter code: Ribonuclease VapC26 (135 aa).

The PINc domain occupies 1 to 118 (MIIDTSALLA…TRTILTLDRR (118 aa)). The Mg(2+) site is built by Asp-4 and Asp-97.

This sequence belongs to the PINc/VapC protein family. Mg(2+) is required as a cofactor.

Functionally, toxic component of a type II toxin-antitoxin (TA) system. An RNase. Upon expression in M.smegmatis inhibits colony formation. Its toxic effect is neutralized by coexpression with cognate antitoxin VapB26. This Mycobacterium tuberculosis (strain ATCC 25618 / H37Rv) protein is Ribonuclease VapC26.